A 207-amino-acid polypeptide reads, in one-letter code: MGFREKLKLYVITDRRLKPEVKSVRQALEGGATSIQLRIKDASTKEMYEVGKEIRRLTQEYDALFFVDDRIDVALAVNADGVQLGPEDMPIEVAREIAPNLIIGASVYSLEEALEAEKKGADYLGAGSVFPTKTKRDVRVIRIEGLREIVEAVSIPVVAIGGINVENVKQVLSAGVDGIAVVSAVMGASDVKKATEELRKIIEEVLG.

4-amino-2-methyl-5-(diphosphooxymethyl)pyrimidine is bound by residues 36–40 and Asp-68; that span reads QLRIK. Positions 69 and 88 each coordinate Mg(2+). Ser-106 provides a ligand contact to 4-amino-2-methyl-5-(diphosphooxymethyl)pyrimidine. 132 to 134 contacts 2-[(2R,5Z)-2-carboxy-4-methylthiazol-5(2H)-ylidene]ethyl phosphate; that stretch reads TKT. Position 135 (Lys-135) interacts with 4-amino-2-methyl-5-(diphosphooxymethyl)pyrimidine. Residues Gly-162 and 182–183 contribute to the 2-[(2R,5Z)-2-carboxy-4-methylthiazol-5(2H)-ylidene]ethyl phosphate site; that span reads VS.

This sequence belongs to the thiamine-phosphate synthase family. Mg(2+) is required as a cofactor.

It carries out the reaction 2-[(2R,5Z)-2-carboxy-4-methylthiazol-5(2H)-ylidene]ethyl phosphate + 4-amino-2-methyl-5-(diphosphooxymethyl)pyrimidine + 2 H(+) = thiamine phosphate + CO2 + diphosphate. The enzyme catalyses 2-(2-carboxy-4-methylthiazol-5-yl)ethyl phosphate + 4-amino-2-methyl-5-(diphosphooxymethyl)pyrimidine + 2 H(+) = thiamine phosphate + CO2 + diphosphate. It catalyses the reaction 4-methyl-5-(2-phosphooxyethyl)-thiazole + 4-amino-2-methyl-5-(diphosphooxymethyl)pyrimidine + H(+) = thiamine phosphate + diphosphate. It functions in the pathway cofactor biosynthesis; thiamine diphosphate biosynthesis; thiamine phosphate from 4-amino-2-methyl-5-diphosphomethylpyrimidine and 4-methyl-5-(2-phosphoethyl)-thiazole: step 1/1. Its function is as follows. Condenses 4-methyl-5-(beta-hydroxyethyl)thiazole monophosphate (THZ-P) and 2-methyl-4-amino-5-hydroxymethyl pyrimidine pyrophosphate (HMP-PP) to form thiamine monophosphate (TMP). The protein is Thiamine-phosphate synthase of Pyrococcus abyssi (strain GE5 / Orsay).